The primary structure comprises 261 residues: 5'-nucleotidase SurE (261 aa).

Residues aspartate 8, aspartate 9, serine 39, and asparagine 91 each coordinate a divalent metal cation.

Belongs to the SurE nucleotidase family. The cofactor is a divalent metal cation.

It localises to the cytoplasm. The catalysed reaction is a ribonucleoside 5'-phosphate + H2O = a ribonucleoside + phosphate. Nucleotidase that shows phosphatase activity on nucleoside 5'-monophosphates. This chain is 5'-nucleotidase SurE, found in Polaromonas naphthalenivorans (strain CJ2).